A 293-amino-acid polypeptide reads, in one-letter code: Ribosomal protein L11 methyltransferase (293 aa).

S-adenosyl-L-methionine is bound by residues threonine 145, glycine 166, aspartate 188, and asparagine 230.

This sequence belongs to the methyltransferase superfamily. PrmA family.

It localises to the cytoplasm. It carries out the reaction L-lysyl-[protein] + 3 S-adenosyl-L-methionine = N(6),N(6),N(6)-trimethyl-L-lysyl-[protein] + 3 S-adenosyl-L-homocysteine + 3 H(+). Functionally, methylates ribosomal protein L11. The sequence is that of Ribosomal protein L11 methyltransferase from Erwinia tasmaniensis (strain DSM 17950 / CFBP 7177 / CIP 109463 / NCPPB 4357 / Et1/99).